Consider the following 296-residue polypeptide: Cobalamin trafficking protein CblD (296 aa).

A mitochondrion-targeting transit peptide spans 1–38 (MANVLCNRARLVSYLPGFCSLVKRVVNPKAFSTAGSSG). An N6-acetyllysine modification is found at K203.

Heterodimer with MMACHC. Forms a multiprotein complex with MMACHC, MTR and MTRR. Widely expressed at high levels.

The protein localises to the cytoplasm. The protein resides in the mitochondrion. Its function is as follows. Involved in cobalamin metabolism and trafficking. Plays a role in regulating the biosynthesis and the proportion of two coenzymes, methylcob(III)alamin (MeCbl) and 5'-deoxyadenosylcobalamin (AdoCbl). Promotes oxidation of cob(II)alamin bound to MMACHC. The processing of cobalamin in the cytosol occurs in a multiprotein complex composed of at least MMACHC, MMADHC, MTRR (methionine synthase reductase) and MTR (methionine synthase) which may contribute to shuttle safely and efficiently cobalamin towards MTR in order to produce methionine. The protein is Cobalamin trafficking protein CblD of Homo sapiens (Human).